The chain runs to 88 residues: Cytochrome c6 (88 aa).

Residues C15, C18, H19, and M61 each coordinate heme c.

This sequence belongs to the cytochrome c family. PetJ subfamily. Monomer. Binds 1 heme c group covalently per subunit.

It localises to the plastid. The protein localises to the chloroplast thylakoid lumen. Functionally, functions as an electron carrier between membrane-bound cytochrome b6-f and photosystem I in oxygenic photosynthesis. This Bryopsis maxima (Green alga) protein is Cytochrome c6 (petJ).